A 367-amino-acid polypeptide reads, in one-letter code: Serine/threonine-protein kinase-transforming protein Rmil (367 aa).

The tract at residues 1 to 64 is disordered; that stretch reads EGGSTAGLSA…DSSDDWEIPD (64 aa). A compositionally biased stretch (basic and acidic residues) spans 33–57; that stretch reads QRERKSSSSSEDRNRMKTLGRRDSS. Positions 67-327 constitute a Protein kinase domain; it reads ITVGQRIGSG…PQILASIELL (261 aa). Residues 73–81 and Lys-93 each bind ATP; that span reads IGSGSFGTV. Asp-186 (proton acceptor) is an active-site residue.

It belongs to the protein kinase superfamily. TKL Ser/Thr protein kinase family. RAF subfamily.

It carries out the reaction L-seryl-[protein] + ATP = O-phospho-L-seryl-[protein] + ADP + H(+). It catalyses the reaction L-threonyl-[protein] + ATP = O-phospho-L-threonyl-[protein] + ADP + H(+). The sequence is that of Serine/threonine-protein kinase-transforming protein Rmil (V-RMIL) from Avian retrovirus IC10.